The chain runs to 127 residues: Large ribosomal subunit protein uL18 (127 aa).

It belongs to the universal ribosomal protein uL18 family. In terms of assembly, part of the 50S ribosomal subunit; part of the 5S rRNA/L5/L18/L25 subcomplex. Contacts the 5S and 23S rRNAs.

Functionally, this is one of the proteins that bind and probably mediate the attachment of the 5S RNA into the large ribosomal subunit, where it forms part of the central protuberance. This Streptomyces avermitilis (strain ATCC 31267 / DSM 46492 / JCM 5070 / NBRC 14893 / NCIMB 12804 / NRRL 8165 / MA-4680) protein is Large ribosomal subunit protein uL18.